The following is a 607-amino-acid chain: Aspartate--tRNA(Asp/Asn) ligase (607 aa).

Glu168 provides a ligand contact to L-aspartate. An aspartate region spans residues 192 to 195; the sequence is QLFK. Arg214 is a binding site for L-aspartate. ATP contacts are provided by residues 214 to 216 and Gln223; that span reads RDE. His449 is a binding site for L-aspartate. Position 483 (Glu483) interacts with ATP. Arg490 contributes to the L-aspartate binding site. ATP is bound at residue 535 to 538; sequence GWDR. The segment at 578-607 is disordered; it reads LEAGVDARPKPEARAQAGTAGPAAPVADPT. Over residues 580–590 the composition is skewed to basic and acidic residues; it reads AGVDARPKPEA. Residues 591-607 show a composition bias toward low complexity; sequence RAQAGTAGPAAPVADPT.

Belongs to the class-II aminoacyl-tRNA synthetase family. Type 1 subfamily. Homodimer.

It is found in the cytoplasm. It carries out the reaction tRNA(Asx) + L-aspartate + ATP = L-aspartyl-tRNA(Asx) + AMP + diphosphate. In terms of biological role, aspartyl-tRNA synthetase with relaxed tRNA specificity since it is able to aspartylate not only its cognate tRNA(Asp) but also tRNA(Asn). Reaction proceeds in two steps: L-aspartate is first activated by ATP to form Asp-AMP and then transferred to the acceptor end of tRNA(Asp/Asn). This is Aspartate--tRNA(Asp/Asn) ligase from Salinispora tropica (strain ATCC BAA-916 / DSM 44818 / JCM 13857 / NBRC 105044 / CNB-440).